The chain runs to 1979 residues: E3 ubiquitin-protein ligase TTC3 (1979 aa).

Residues 1-230 (MDDFAEGGLS…RHSCMQCVKQ (230 aa)) form an interaction with POLG region. TPR repeat units follow at residues 231–264 (GELM…RPEN) and 266–298 (LLYG…KNTW). A Phosphoserine modification is found at Ser378. The tract at residues 422 to 457 (CDCHPEFLPPPSQPPRHKGKQKSRNNESEKPSFNSE) is disordered. TPR repeat units follow at residues 536–572 (VLVV…YPNE) and 576–609 (CLAY…ISRL). The tract at residues 783–811 (LAQERMEEDLRESNPPKNEEPEETSDSAQ) is disordered. Ser1009 bears the Phosphoserine mark. 7 disordered regions span residues 1021–1067 (NKGK…GPFA), 1214–1289 (QPDV…EEAK), 1402–1427 (QGSA…SSDS), 1574–1601 (KNDG…DEKT), 1757–1776 (MDSA…GSPT), 1788–1821 (KGAS…KKPS), and 1873–1927 (DEQK…PAPD). Low complexity predominate over residues 1036-1050 (VGSGAASVAPSSEAV). Position 1060 is a phosphoserine (Ser1060). Residues 1214 to 1227 (QPDVKSEALSEDVK) show a composition bias toward basic and acidic residues. The span at 1248–1257 (DSDSSSGSAS) shows a compositional bias: low complexity. Residues 1576–1586 (DGFDKECEPHP) show a composition bias toward basic and acidic residues. Polar residues-rich tracts occupy residues 1788–1799 (KGASQVSPSEQS) and 1808–1821 (GQAT…KKPS). At Ser1794 the chain carries Phosphoserine. A compositionally biased stretch (basic and acidic residues) spans 1873–1890 (DEQKKKKPNPGKDKKTSE). The RING-type; atypical zinc finger occupies 1931-1971 (CEICHEIFKSKNMRVLKCGHKFHKGCFKQWLKGQSTCPTCG).

Interacts (when phosphorylated on Ser-378) with AKT1, AKT2 and AKT3 (when phosphorylated). Interacts with CIT. Interacts with POLG. Interacts with HSP70. Interacts with SMURF2. Phosphorylation on Ser-378 by Akt is required for ubiquitin ligase activity. In terms of processing, proteolytically cleaved into differently sized N- and C-terminal fragments.

The protein resides in the nucleus. The protein localises to the cytoplasm. It localises to the golgi apparatus. The catalysed reaction is S-ubiquitinyl-[E2 ubiquitin-conjugating enzyme]-L-cysteine + [acceptor protein]-L-lysine = [E2 ubiquitin-conjugating enzyme]-L-cysteine + N(6)-ubiquitinyl-[acceptor protein]-L-lysine.. Its pathway is protein modification; protein ubiquitination. Functionally, E3 ubiquitin-protein ligase which catalyzes the formation of 'Lys-48'-polyubiquitin chains. Mediates the ubiquitination and subsequent degradation of phosphorylated Akt (AKT1, AKT2 and AKT3) in the nucleus. Acts as a terminal regulator of Akt signaling after activation; its phosphorylation by Akt, which is a prerequisite for ubiquitin ligase activity, suggests the existence of a regulation mechanism required to control Akt levels after activation. Positively regulates TGFB1-induced epithelial-mesenchymal transition and myofibroblast differentiation by mediating the ubiquitination and subsequent degradation of SMURF2. Regulates neuronal differentiation by regulating actin remodeling and Golgi organization via a signaling cascade involving RHOA, CIT and ROCK. Inhibits cell proliferation. The protein is E3 ubiquitin-protein ligase TTC3 (Ttc3) of Mus musculus (Mouse).